The following is a 105-amino-acid chain: Nucleoid-associated protein cu1912 (105 aa).

This sequence belongs to the YbaB/EbfC family. In terms of assembly, homodimer.

The protein localises to the cytoplasm. It localises to the nucleoid. In terms of biological role, binds to DNA and alters its conformation. May be involved in regulation of gene expression, nucleoid organization and DNA protection. The chain is Nucleoid-associated protein cu1912 from Corynebacterium urealyticum (strain ATCC 43042 / DSM 7109).